The primary structure comprises 125 residues: MIRGIGTDIVYIPRILRILQKYGKKFLNKIYTEQEIEISRKYNSQEMQAKYLAKRFAAKEAFVKALGGFSHGIIMKDIEIYNDVRGKPHLTVSKNFIFKDHMIHLSLSDDGDCATAFVIICSSLP.

The Mg(2+) site is built by aspartate 8 and glutamate 60.

Belongs to the P-Pant transferase superfamily. AcpS family. The cofactor is Mg(2+).

It is found in the cytoplasm. The catalysed reaction is apo-[ACP] + CoA = holo-[ACP] + adenosine 3',5'-bisphosphate + H(+). Functionally, transfers the 4'-phosphopantetheine moiety from coenzyme A to a Ser of acyl-carrier-protein. This Wolbachia sp. subsp. Brugia malayi (strain TRS) protein is Holo-[acyl-carrier-protein] synthase.